The primary structure comprises 196 residues: MNINTDIFKIQSNNVMPSRGKILISEPFLHDVTFGRSVVLLVDHTEEGSMGLIINKPLPLMLNDIIKEFKYIEDIPLHKGGPIGTDTLFYLHTLHEIPGTLPINNGLYLNGDFDAIKKYILQGNPIKGKIRFFLGYSGWECEQLIQEIKENTWIISKEENTYLMNEDIKGMWKEALGKLGSKYETWSRFPQVPSLN.

The protein belongs to the UPF0301 (AlgH) family.

The chain is UPF0301 protein BF2109 from Bacteroides fragilis (strain ATCC 25285 / DSM 2151 / CCUG 4856 / JCM 11019 / LMG 10263 / NCTC 9343 / Onslow / VPI 2553 / EN-2).